The chain runs to 422 residues: DNA-directed RNA polymerase III subunit RPC4 (422 aa).

Disordered stretches follow at residues 1–80 (MSSN…GQQR), 115–190 (KSEG…DDEE), 219–244 (IQEA…GTGL), and 318–350 (RPAV…TKDA). The short motif at 25 to 29 (KPSLK) is the Nuclear localization signal element. The segment covering 28–37 (LKFKPKAVAR) has biased composition (basic residues). Positions 38–64 (KSKEEREAAASKVKLEEESKRGNDKKH) are enriched in basic and acidic residues. Ser137 and Ser138 each carry phosphoserine. Over residues 138-148 (SENEAEDDDNE) the composition is skewed to acidic residues. Residues 160–170 (MGKEFEARNLI) are compositionally biased toward basic and acidic residues. A phosphoserine mark is found at Ser178, Ser182, and Ser224. Over residues 219-229 (IQEALSEKPTR) the composition is skewed to basic and acidic residues. Phosphothreonine is present on residues Thr228 and Thr232.

It belongs to the eukaryotic RPC4/POLR3D RNA polymerase subunit family. In terms of assembly, component of the RNA polymerase III (Pol III) complex consisting of 17 subunits. Interacts with RPC37/RPC5. RPC53/RPC4, RPC37/RPC5 and RPC11/RPC10 probably form a Pol III subcomplex.

It localises to the nucleus. Its function is as follows. DNA-dependent RNA polymerase catalyzes the transcription of DNA into RNA using the four ribonucleoside triphosphates as substrates. Specific peripheric component of RNA polymerase III which synthesizes small RNAs, such as 5S rRNA and tRNAs. Essential for tRNA synthesis. The RPC53/RPC4-RPC37/RPC5 subcomplex is required for terminator recognition and reinitiation. This is DNA-directed RNA polymerase III subunit RPC4 (RPC53) from Saccharomyces cerevisiae (strain ATCC 204508 / S288c) (Baker's yeast).